Reading from the N-terminus, the 342-residue chain is MNTNDFDFELPEELIAQTPLEKRDSSKLLIIDHRQKTMVDSHFDHIIDQLNPGDALVMNNTRVLPARLYGEKPDTHGHVELLLLKNTQGDQWEVLAKPAKRLKVGSQVNFGDGHLKATIIDELEHGGRIVEFSYDGIFLEVLESLGEMPLPPYIHEKLEDAERYQTVYAKENGSAAAPTAGLHFTTDLLKKIEAKGVHLVYLTLHVGLGTFRPVSVDNLDEHDMHSEFYSLSEEAAQTLRDVKQAGGRVVAVGTTSIRTLETIGSKFQGDIQADSGWTNIFIKPGYQFKVVDAFSTNFHLPKSTLVMLVSAFAGRDFVLEAYRHAVDEKYRFFSFGDAMFVN.

This sequence belongs to the QueA family. In terms of assembly, monomer.

The protein localises to the cytoplasm. It carries out the reaction 7-aminomethyl-7-carbaguanosine(34) in tRNA + S-adenosyl-L-methionine = epoxyqueuosine(34) in tRNA + adenine + L-methionine + 2 H(+). It functions in the pathway tRNA modification; tRNA-queuosine biosynthesis. Its function is as follows. Transfers and isomerizes the ribose moiety from AdoMet to the 7-aminomethyl group of 7-deazaguanine (preQ1-tRNA) to give epoxyqueuosine (oQ-tRNA). The chain is S-adenosylmethionine:tRNA ribosyltransferase-isomerase from Streptococcus pyogenes serotype M3 (strain ATCC BAA-595 / MGAS315).